The chain runs to 236 residues: Probable transcriptional regulatory protein Suden_1389 (236 aa).

The protein belongs to the TACO1 family.

The protein localises to the cytoplasm. This Sulfurimonas denitrificans (strain ATCC 33889 / DSM 1251) (Thiomicrospira denitrificans (strain ATCC 33889 / DSM 1251)) protein is Probable transcriptional regulatory protein Suden_1389.